Here is a 146-residue protein sequence, read N- to C-terminus: Large ribosomal subunit protein uL15 (146 aa).

The segment at 1 to 57 (MKLHELKPAQGSRKTRNRVGRGSSSGNGKTAGRGQKGQKARSGGNIRSGFEGGQTPL) is disordered. The span at 23-35 (SSSGNGKTAGRGQ) shows a compositional bias: gly residues.

It belongs to the universal ribosomal protein uL15 family. Part of the 50S ribosomal subunit.

Functionally, binds to the 23S rRNA. This Streptococcus mutans serotype c (strain ATCC 700610 / UA159) protein is Large ribosomal subunit protein uL15.